Consider the following 639-residue polypeptide: Threonine--tRNA ligase (639 aa).

Residues 1 to 61 (MATVRLPDGK…DGGGELEFVT (61 aa)) enclose the TGS domain. Residues 239–536 (DHRRLGRELG…LIEHYAGAFP (298 aa)) form a catalytic region. 3 residues coordinate Zn(2+): Cys333, His384, and His513.

It belongs to the class-II aminoacyl-tRNA synthetase family. In terms of assembly, homodimer. Zn(2+) is required as a cofactor.

The protein localises to the cytoplasm. The enzyme catalyses tRNA(Thr) + L-threonine + ATP = L-threonyl-tRNA(Thr) + AMP + diphosphate + H(+). Catalyzes the attachment of threonine to tRNA(Thr) in a two-step reaction: L-threonine is first activated by ATP to form Thr-AMP and then transferred to the acceptor end of tRNA(Thr). Also edits incorrectly charged L-seryl-tRNA(Thr). The protein is Threonine--tRNA ligase of Rubrobacter xylanophilus (strain DSM 9941 / JCM 11954 / NBRC 16129 / PRD-1).